The chain runs to 104 residues: Met repressor (104 aa).

This sequence belongs to the MetJ family. Homodimer.

Its subcellular location is the cytoplasm. In terms of biological role, this regulatory protein, when combined with SAM (S-adenosylmethionine) represses the expression of the methionine regulon and of enzymes involved in SAM synthesis. This chain is Met repressor, found in Shewanella oneidensis (strain ATCC 700550 / JCM 31522 / CIP 106686 / LMG 19005 / NCIMB 14063 / MR-1).